Consider the following 479-residue polypeptide: UDP-N-acetylmuramate--L-alanine ligase (479 aa).

Glycine 126 to threonine 132 contributes to the ATP binding site.

This sequence belongs to the MurCDEF family.

The protein resides in the cytoplasm. The catalysed reaction is UDP-N-acetyl-alpha-D-muramate + L-alanine + ATP = UDP-N-acetyl-alpha-D-muramoyl-L-alanine + ADP + phosphate + H(+). It participates in cell wall biogenesis; peptidoglycan biosynthesis. Cell wall formation. The polypeptide is UDP-N-acetylmuramate--L-alanine ligase (Alkalilimnicola ehrlichii (strain ATCC BAA-1101 / DSM 17681 / MLHE-1)).